A 454-amino-acid polypeptide reads, in one-letter code: Cobyrinate a,c-diamide synthase (454 aa).

The GATase cobBQ-type domain maps to 244-435 (KIAVAYDSAF…VHIHFLSNIA (192 aa)). The active-site Nucleophile is cysteine 327.

This sequence belongs to the CobB/CbiA family. The cofactor is Mg(2+).

The enzyme catalyses cob(II)yrinate + 2 L-glutamine + 2 ATP + 2 H2O = cob(II)yrinate a,c diamide + 2 L-glutamate + 2 ADP + 2 phosphate + 2 H(+). The protein operates within cofactor biosynthesis; adenosylcobalamin biosynthesis; cob(II)yrinate a,c-diamide from sirohydrochlorin (anaerobic route): step 10/10. In terms of biological role, catalyzes the ATP-dependent amidation of the two carboxylate groups at positions a and c of cobyrinate, using either L-glutamine or ammonia as the nitrogen source. The sequence is that of Cobyrinate a,c-diamide synthase from Thermoplasma volcanium (strain ATCC 51530 / DSM 4299 / JCM 9571 / NBRC 15438 / GSS1).